The primary structure comprises 349 residues: Protein RecA (349 aa).

ATP is bound at residue 64–71 (GPESSGKT). The tract at residues 328–349 (NGEIEVEAPSEEEFEDLPLDLK) is disordered. Acidic residues predominate over residues 331-349 (IEVEAPSEEEFEDLPLDLK).

This sequence belongs to the RecA family.

Its subcellular location is the cytoplasm. Functionally, can catalyze the hydrolysis of ATP in the presence of single-stranded DNA, the ATP-dependent uptake of single-stranded DNA by duplex DNA, and the ATP-dependent hybridization of homologous single-stranded DNAs. It interacts with LexA causing its activation and leading to its autocatalytic cleavage. The polypeptide is Protein RecA (Halalkalibacterium halodurans (strain ATCC BAA-125 / DSM 18197 / FERM 7344 / JCM 9153 / C-125) (Bacillus halodurans)).